The chain runs to 177 residues: Late embryogenesis abundant protein 1 (177 aa).

The tract at residues 1–177 is disordered; sequence MASHDQSYKA…DKDHFPTNRH (177 aa). A compositionally biased stretch (basic and acidic residues) spans 28 to 39; sequence IEDKAQAAKEKA. Positions 40 to 89 are enriched in low complexity; sequence QQAAQTAKDKTSQTAQAAKEKTQQTAQAAKEKTQQTAQAAKDETQQTAQA. A run of 4 repeats spans residues 53–63, 64–74, 75–85, and 86–96. Residues 53 to 96 form a 4 X 11 AA approximate tandem repeats of T-A-Q-A-A-K-E-K-T-Q-Q region; it reads TAQAAKEKTQQTAQAAKEKTQQTAQAAKDETQQTAQAAKDKTQQ. Basic and acidic residues predominate over residues 90-117; that stretch reads AKDKTQQTTEATKEKAQDTTGRAREKGS. Over residues 119-142 the composition is skewed to polar residues; the sequence is MGQSTKETAQSGKDNSAGFLQQTG. The span at 164–177 shows a compositional bias: basic and acidic residues; that stretch reads NDDKDKDHFPTNRH.

Belongs to the LEA type 4 family. Highest expression is found in seeds. No expression detected in adult tissues.

The protein is Late embryogenesis abundant protein 1 of Cicer arietinum (Chickpea).